The primary structure comprises 217 residues: MFLIDMFNKKTILPDAATALPGREEEIPTATTHFVSGRPLQGPYPEGMKKVLFGMGCFWGAERLLWEIPGVYVTAAGYSGGLTPNPTYQETTTGLTGHTEVVLVVYDPAKVSLQRLLKTFFEEHDPTQGMRQGNDVGTTYRSAIYVYDEEQLAEANAARNAFQKALRVYNHDREITTEIAKAGPFYFAEDYHQQYLAKNPDGYCGLRGTGVSCPIGA.

The active site involves Cys57.

The protein belongs to the MsrA Met sulfoxide reductase family.

The catalysed reaction is L-methionyl-[protein] + [thioredoxin]-disulfide + H2O = L-methionyl-(S)-S-oxide-[protein] + [thioredoxin]-dithiol. It carries out the reaction [thioredoxin]-disulfide + L-methionine + H2O = L-methionine (S)-S-oxide + [thioredoxin]-dithiol. Functionally, has an important function as a repair enzyme for proteins that have been inactivated by oxidation. Catalyzes the reversible oxidation-reduction of methionine sulfoxide in proteins to methionine. The polypeptide is Peptide methionine sulfoxide reductase MsrA 1 (msrA1) (Rhizobium meliloti (strain 1021) (Ensifer meliloti)).